Reading from the N-terminus, the 235-residue chain is Leucyl/phenylalanyl-tRNA--protein transferase (235 aa).

The protein belongs to the L/F-transferase family.

The protein resides in the cytoplasm. The enzyme catalyses N-terminal L-lysyl-[protein] + L-leucyl-tRNA(Leu) = N-terminal L-leucyl-L-lysyl-[protein] + tRNA(Leu) + H(+). It carries out the reaction N-terminal L-arginyl-[protein] + L-leucyl-tRNA(Leu) = N-terminal L-leucyl-L-arginyl-[protein] + tRNA(Leu) + H(+). It catalyses the reaction L-phenylalanyl-tRNA(Phe) + an N-terminal L-alpha-aminoacyl-[protein] = an N-terminal L-phenylalanyl-L-alpha-aminoacyl-[protein] + tRNA(Phe). Functionally, functions in the N-end rule pathway of protein degradation where it conjugates Leu, Phe and, less efficiently, Met from aminoacyl-tRNAs to the N-termini of proteins containing an N-terminal arginine or lysine. This Aeromonas hydrophila subsp. hydrophila (strain ATCC 7966 / DSM 30187 / BCRC 13018 / CCUG 14551 / JCM 1027 / KCTC 2358 / NCIMB 9240 / NCTC 8049) protein is Leucyl/phenylalanyl-tRNA--protein transferase.